The sequence spans 421 residues: Proton extrusion protein PxcA (421 aa).

A disordered region spans residues 124-153 (PTVHSSNPDDSQLMTSKNNSKPVPDPESDD). Positions 125–144 (TVHSSNPDDSQLMTSKNNSK) are enriched in polar residues. 4 helical membrane passes run 203-223 (FVLL…SFIV), 298-318 (AIKN…LLIS), 345-365 (IIIL…WEVI), and 381-401 (FIFL…KYWI).

It belongs to the CemA family.

Its subcellular location is the cell inner membrane. Its function is as follows. Required for H(+) efflux immediately after light irradiation to form a rapid H(+) concentration gradient across the thylakoid membranes. Together with PxcL, contributes to transient H(+) uptake following dark to light transition. This Synechococcus sp. (strain ATCC 27144 / PCC 6301 / SAUG 1402/1) (Anacystis nidulans) protein is Proton extrusion protein PxcA.